The primary structure comprises 144 residues: Transcription antitermination protein NusB (144 aa).

This sequence belongs to the NusB family.

Involved in transcription antitermination. Required for transcription of ribosomal RNA (rRNA) genes. Binds specifically to the boxA antiterminator sequence of the ribosomal RNA (rrn) operons. The sequence is that of Transcription antitermination protein NusB from Buchnera aphidicola subsp. Baizongia pistaciae (strain Bp).